The following is a 232-amino-acid chain: Vesicle transport through interaction with t-SNAREs homolog 1B (232 aa).

Ala-2 bears the N-acetylalanine mark. 2 interaction with CLINT1 regions span residues 2–23 and 69–73; these read ATSA…GLLE and APLTF. Residues 2–208 are Cytoplasmic-facing; it reads ATSAASSEHF…SRKVITNKLL (207 aa). Positions 36-98 form a coiled coil; it reads AGTEEKKKLV…AKLHREVRST (63 aa). Thr-103 is modified (phosphothreonine). Arg-107 carries the omega-N-methylarginine modification. Ser-138 is subject to Phosphoserine. Residues 160 to 201 adopt a coiled-coil conformation; sequence GSEIIEELGEQRDQLERTKSRLVNTNENLSKSRKILRSMSRK. The chain crosses the membrane as a helical; Anchor for type IV membrane protein span at residues 209-229; the sequence is LSVIIVLELAILVGLVYYKFF. At 230–232 the chain is on the vesicular side; the sequence is RHH.

The protein belongs to the VTI1 family. As to quaternary structure, forms a SNARE complex with STX7, STX8 and VAMP8 which functions in the homotypic fusion of late endosomes. Component of the SNARE complex composed of STX7, STX8, VAMP7 and VIT1B that is required for heterotypic fusion of late endosomes with lysosomes. May interact with STX17. Interacts with CLINT1.

The protein localises to the early endosome membrane. The protein resides in the late endosome membrane. It localises to the lysosome membrane. It is found in the cytoplasmic granule. Its subcellular location is the recycling endosome membrane. In terms of biological role, V-SNARE that mediates vesicle transport pathways through interactions with t-SNAREs on the target membrane. These interactions are proposed to mediate aspects of the specificity of vesicle trafficking and to promote fusion of the lipid bilayers. The protein is Vesicle transport through interaction with t-SNAREs homolog 1B (Vti1b) of Rattus norvegicus (Rat).